The sequence spans 92 residues: N(2)-fixation sustaining protein CowN (92 aa).

This sequence belongs to the CowN family.

Is required to sustain N(2)-dependent growth in the presence of low levels of carbon monoxide (CO). Probably acts by protecting the N(2) fixation ability of the nitrogenase complex, which is inactivated in the presence of CO. This Rhodopseudomonas palustris (strain ATCC BAA-98 / CGA009) protein is N(2)-fixation sustaining protein CowN.